Reading from the N-terminus, the 313-residue chain is Ribonuclease HIII (313 aa).

One can recognise an RNase H type-2 domain in the interval 94–310 (MSVIGSDEVG…TQKAKRLVER (217 aa)). A divalent metal cation-binding residues include aspartate 100, glutamate 101, and aspartate 205.

This sequence belongs to the RNase HII family. RnhC subfamily. Mn(2+) serves as cofactor. Requires Mg(2+) as cofactor.

The protein resides in the cytoplasm. The catalysed reaction is Endonucleolytic cleavage to 5'-phosphomonoester.. Endonuclease that specifically degrades the RNA of RNA-DNA hybrids. The sequence is that of Ribonuclease HIII from Bacillus velezensis (strain DSM 23117 / BGSC 10A6 / LMG 26770 / FZB42) (Bacillus amyloliquefaciens subsp. plantarum).